Reading from the N-terminus, the 142-residue chain is MAAAAEGVLATRRDESARDDAAVETAEEAKEPAEADITELCRDMFSKMATYLTGELTATSEDYKLLENMNKLTSLKYLEMKDIAINISRNLKDLNQKYAGLQPYLDQINVIEEQVAALEQAAYKLDAYSKKLEAKYKKLEKR.

The disordered stretch occupies residues 1–33; it reads MAAAAEGVLATRRDESARDDAAVETAEEAKEPA. Residue Ala2 is modified to N-acetylalanine. A compositionally biased stretch (basic and acidic residues) spans 11-33; it reads TRRDESARDDAAVETAEEAKEPA. Residues 79–127 adopt a coiled-coil conformation; it reads EMKDIAINISRNLKDLNQKYAGLQPYLDQINVIEEQVAALEQAAYKLDA.

The protein belongs to the BLOC1S2 family. As to quaternary structure, component of the biogenesis of lysosome-related organelles complex 1 (BLOC-1) composed of BLOC1S1, BLOC1S2, BLOC1S3, BLOC1S4, BLOC1S5, BLOC1S6, DTNBP1/BLOC1S7 and SNAPIN/BLOC1S8. Octamer composed of one copy each BLOC1S1, BLOC1S2, BLOC1S3, BLOC1S4, BLOC1S5, BLOC1S6, DTNBP1/BLOC1S7 and SNAPIN/BLOC1S8. Interacts directly with BLOC1S1, BLOC1S3, BLOC1S4, BLOC1S5 and SNAPIN. The BLOC-1 complex associates with the AP-3 protein complex and membrane protein cargos. Component of the BLOC-one-related complex (BORC) which is composed of BLOC1S1, BLOC1S2, BORCS5, BORCS6, BORCS7, BORCS8, KXD1 and SNAPIN. Interacts with gamma-tubulin. Interacts with IFT57.

The protein localises to the cytoplasm. The protein resides in the cytoskeleton. It is found in the microtubule organizing center. It localises to the centrosome. Its subcellular location is the lysosome membrane. Its function is as follows. Component of the BLOC-1 complex, a complex that is required for normal biogenesis of lysosome-related organelles (LRO), such as platelet dense granules and melanosomes. In concert with the AP-3 complex, the BLOC-1 complex is required to target membrane protein cargos into vesicles assembled at cell bodies for delivery into neurites and nerve terminals. The BLOC-1 complex, in association with SNARE proteins, is also proposed to be involved in neurite extension. As part of the BORC complex may play a role in lysosomes movement and localization at the cell periphery. Associated with the cytosolic face of lysosomes, the BORC complex may recruit ARL8B and couple lysosomes to microtubule plus-end-directed kinesin motor. May play a role in cell proliferation. This Macaca fascicularis (Crab-eating macaque) protein is Biogenesis of lysosome-related organelles complex 1 subunit 2 (BLOC1S2).